A 138-amino-acid polypeptide reads, in one-letter code: Putative ribonuclease VapC45 (138 aa).

Its function is as follows. Toxic component of a type II toxin-antitoxin (TA) system. An RNase. The cognate antitoxin is VapB45. The protein is Putative ribonuclease VapC45 of Mycobacterium tuberculosis (strain ATCC 25618 / H37Rv).